A 1043-amino-acid polypeptide reads, in one-letter code: Glutamate receptor ionotropic, NMDA 3B (1043 aa).

The N-terminal stretch at 1–22 (MEFVRALWLGLALALGPGSAGG) is a signal peptide. Over 23–574 (HPQPCGVLAR…PIGAFMWPLH (552 aa)) the chain is Extracellular. N-linked (GlcNAc...) asparagine glycosylation is found at Asn69, Asn344, Asn451, and Asn465. Cystine bridges form between Cys439–Cys475 and Cys445–Cys476. Glycine contacts are provided by Ser531, Ser533, and Arg538. The D-serine site is built by Ser533 and Arg538. A helical transmembrane segment spans residues 575-594 (WSTWLGVFAALHLTALFLTV). Residues 595–615 (YEWRSPYGLTPRGRNRSTVFS) lie on the Cytoplasmic side of the membrane. The segment at residues 616-627 (YSSALNLCYAIL) is an intramembrane region (discontinuously helical). The Cytoplasmic portion of the chain corresponds to 628–641 (FRRTVSSKTPKCPT). The helical transmembrane segment at 642 to 661 (GRLLMNLWAIFCLLVLSSYT) threads the bilayer. Residues 662 to 832 (ANLAAVMVGD…TLQMSIYHFA (171 aa)) lie on the Extracellular side of the membrane. Ser701 serves as a coordination point for glycine. D-serine-binding residues include Ser701, Ala702, and Asp745. Asp745 contacts glycine. N-linked (GlcNAc...) asparagine glycosylation occurs at Asn786. The helical transmembrane segment at 833-848 (GLFVLLCLGLGSALLS) threads the bilayer. Over 849-1043 (SLGEHAFFRL…PHSGRPGSQE (195 aa)) the chain is Cytoplasmic. Disordered stretches follow at residues 882–924 (ALNT…WKRA) and 1012–1043 (GDSARHRPRRLLQARAAPAEAPPHSGRPGSQE). The involved in the trafficking and surface expression of NMDARs stretch occupies residues 979–1012 (QPGELQELERRIEVARERLRQALVRRGQLLAQLG). Residues 1024–1035 (QARAAPAEAPPH) show a composition bias toward low complexity.

Belongs to the glutamate-gated ion channel (TC 1.A.10.1) family. NR3B/GRIN3B subfamily. As to quaternary structure, forms heterotetrameric channels that contain at least two GluN1 subunits and at least a combination of one GluN2 and one GluN3 subunits (in vitro). Forms heterotetrameric channels composed of two GluN1/zeta subunits (GRIN1), and two identical GluN3 subunits (GRIN3A or GRIN3B) (in vitro). Does not form functional homomeric channels.

It is found in the cell membrane. Its subcellular location is the postsynaptic cell membrane. It catalyses the reaction Ca(2+)(in) = Ca(2+)(out). The catalysed reaction is Na(+)(in) = Na(+)(out). Functionally, component of a non-conventional N-methyl-D-aspartate (NMDA) receptors (NMDARs) that function as heterotetrameric, ligand-gated cation channels with low calcium permeability and low voltage-dependent block by Mg(2+). Forms glutamatergic receptor complexes with GluN1 and GluN2 subunits which are activated by glycine binding to the GluN1 and GluN3 subunits and L-glutamate binding to GluN2 subunits. Forms excitatory glycinergic receptor complexes with GluN1 alone which are activated by glycine binding to the GluN1 and GluN3 subunits. GluN3B subunit also binds D-serine and, in the absence of glycine, activates glycinergic receptor complexes, but with lower efficacy than glycine. Each GluN3 subunit confers differential attributes to channel properties, including activation, deactivation and desensitization kinetics, pH sensitivity, Ca2(+) permeability, and binding to allosteric modulators. The protein is Glutamate receptor ionotropic, NMDA 3B of Homo sapiens (Human).